The following is a 432-amino-acid chain: Enolase (432 aa).

(2R)-2-phosphoglycerate is bound at residue Gln167. Glu209 functions as the Proton donor in the catalytic mechanism. Mg(2+)-binding residues include Asp246, Glu289, and Asp316. (2R)-2-phosphoglycerate contacts are provided by Lys341, Arg370, Ser371, and Lys392. The Proton acceptor role is filled by Lys341.

The protein belongs to the enolase family. Mg(2+) is required as a cofactor.

The protein resides in the cytoplasm. Its subcellular location is the secreted. The protein localises to the cell surface. The enzyme catalyses (2R)-2-phosphoglycerate = phosphoenolpyruvate + H2O. Its pathway is carbohydrate degradation; glycolysis; pyruvate from D-glyceraldehyde 3-phosphate: step 4/5. In terms of biological role, catalyzes the reversible conversion of 2-phosphoglycerate (2-PG) into phosphoenolpyruvate (PEP). It is essential for the degradation of carbohydrates via glycolysis. The protein is Enolase of Petrotoga mobilis (strain DSM 10674 / SJ95).